An 83-amino-acid polypeptide reads, in one-letter code: Exodeoxyribonuclease 7 small subunit (83 aa).

It belongs to the XseB family. As to quaternary structure, heterooligomer composed of large and small subunits.

The protein resides in the cytoplasm. It catalyses the reaction Exonucleolytic cleavage in either 5'- to 3'- or 3'- to 5'-direction to yield nucleoside 5'-phosphates.. Its function is as follows. Bidirectionally degrades single-stranded DNA into large acid-insoluble oligonucleotides, which are then degraded further into small acid-soluble oligonucleotides. In Rhizobium rhizogenes (strain K84 / ATCC BAA-868) (Agrobacterium radiobacter), this protein is Exodeoxyribonuclease 7 small subunit.